Consider the following 401-residue polypeptide: Alternative oxidase, mitochondrial (401 aa).

The interval Lys53 to Val81 is disordered. Residues Leu184 to Leu204 form a helical membrane-spanning segment. Residues Glu191, Glu230, and His233 each coordinate Fe cation. The chain crosses the membrane as a helical span at residues Ala249–Ser269. The Fe cation site is built by Glu281, Glu282, Glu335, and His338.

This sequence belongs to the alternative oxidase family. Fe cation is required as a cofactor.

It localises to the mitochondrion inner membrane. Functionally, catalyzes cyanide-resistant oxygen consumption. May increase respiration when the cytochrome respiratory pathway is restricted, or in response to low temperatures. The protein is Alternative oxidase, mitochondrial (AOX1) of Cryptococcus neoformans var. grubii serotype A (strain H99 / ATCC 208821 / CBS 10515 / FGSC 9487) (Filobasidiella neoformans var. grubii).